The following is a 325-amino-acid chain: Ribosomal RNA small subunit methyltransferase H (325 aa).

The interval 1–28 (MTASQPLDQADQDSESSSAGSSAAETEH) is disordered. Low complexity predominate over residues 15–24 (ESSSAGSSAA). Residues 56–58 (GGH), D82, Y110, D131, and Q138 contribute to the S-adenosyl-L-methionine site. Residues 303–325 (TDEEVQANPRSRSAKLRVAKRVE) are disordered. The segment covering 314 to 325 (RSAKLRVAKRVE) has biased composition (basic residues).

The protein belongs to the methyltransferase superfamily. RsmH family.

The protein resides in the cytoplasm. It carries out the reaction cytidine(1402) in 16S rRNA + S-adenosyl-L-methionine = N(4)-methylcytidine(1402) in 16S rRNA + S-adenosyl-L-homocysteine + H(+). In terms of biological role, specifically methylates the N4 position of cytidine in position 1402 (C1402) of 16S rRNA. The polypeptide is Ribosomal RNA small subunit methyltransferase H (Rhodopirellula baltica (strain DSM 10527 / NCIMB 13988 / SH1)).